The following is a 238-amino-acid chain: Octanoyltransferase (238 aa).

One can recognise a BPL/LPL catalytic domain in the interval Ala40–Leu220. Substrate contacts are provided by residues Arg78–His85, Ala150–Gly152, and Gly163–Ala165. Cys181 functions as the Acyl-thioester intermediate in the catalytic mechanism.

Belongs to the LipB family.

Its subcellular location is the cytoplasm. It catalyses the reaction octanoyl-[ACP] + L-lysyl-[protein] = N(6)-octanoyl-L-lysyl-[protein] + holo-[ACP] + H(+). The protein operates within protein modification; protein lipoylation via endogenous pathway; protein N(6)-(lipoyl)lysine from octanoyl-[acyl-carrier-protein]: step 1/2. Catalyzes the transfer of endogenously produced octanoic acid from octanoyl-acyl-carrier-protein onto the lipoyl domains of lipoate-dependent enzymes. Lipoyl-ACP can also act as a substrate although octanoyl-ACP is likely to be the physiological substrate. This Mycobacterium sp. (strain JLS) protein is Octanoyltransferase.